Reading from the N-terminus, the 139-residue chain is S-adenosyl-L-methionine-binding protein AF_0241 (139 aa).

Residues 3 to 133 (LKPIGVVKSP…YSPEIDCVNQ (131 aa)) form the TsaA-like domain. S-adenosyl-L-methionine is bound by residues Q16, 20 to 22 (PRQ), 58 to 59 (DK), R82, L92, and 113 to 116 (LDGS).

Belongs to the tRNA methyltransferase O family. In terms of assembly, homodimer.

The sequence is that of S-adenosyl-L-methionine-binding protein AF_0241 from Archaeoglobus fulgidus (strain ATCC 49558 / DSM 4304 / JCM 9628 / NBRC 100126 / VC-16).